The following is a 722-amino-acid chain: Putative tyrosine-protein kinase in cps region (722 aa).

The next 2 membrane-spanning stretches (helical) occupy residues 31 to 53 and 427 to 449; these read IIIALTSFATLIALLYAFFATPI and IVVLAGLFIGLVISVSLVLVRIL.

It belongs to the etk/wzc family. Post-translationally, autophosphorylated on tyrosine residue(s).

The protein localises to the cell inner membrane. The enzyme catalyses L-tyrosyl-[protein] + ATP = O-phospho-L-tyrosyl-[protein] + ADP + H(+). It participates in glycan metabolism; exopolysaccharide biosynthesis. This is Putative tyrosine-protein kinase in cps region from Klebsiella pneumoniae.